We begin with the raw amino-acid sequence, 302 residues long: Glycine--tRNA ligase alpha subunit (302 aa).

It belongs to the class-II aminoacyl-tRNA synthetase family. Tetramer of two alpha and two beta subunits.

It is found in the cytoplasm. The catalysed reaction is tRNA(Gly) + glycine + ATP = glycyl-tRNA(Gly) + AMP + diphosphate. This chain is Glycine--tRNA ligase alpha subunit, found in Xanthomonas axonopodis pv. citri (strain 306).